A 404-amino-acid polypeptide reads, in one-letter code: Exodeoxyribonuclease 7 large subunit (404 aa).

Belongs to the XseA family. Heterooligomer composed of large and small subunits.

The protein resides in the cytoplasm. The catalysed reaction is Exonucleolytic cleavage in either 5'- to 3'- or 3'- to 5'-direction to yield nucleoside 5'-phosphates.. Its function is as follows. Bidirectionally degrades single-stranded DNA into large acid-insoluble oligonucleotides, which are then degraded further into small acid-soluble oligonucleotides. The sequence is that of Exodeoxyribonuclease 7 large subunit from Fusobacterium nucleatum subsp. nucleatum (strain ATCC 25586 / DSM 15643 / BCRC 10681 / CIP 101130 / JCM 8532 / KCTC 2640 / LMG 13131 / VPI 4355).